Consider the following 283-residue polypeptide: NifU-like protein 4, mitochondrial (283 aa).

The transit peptide at 1-48 (MKGIARLVTSLSRIGGRKVVSGTSTVTSSSSSSLLLSRRSLFISATNL) directs the protein to the mitochondrion.

The protein belongs to the NifU family. In terms of tissue distribution, predominantly expressed in roots.

It is found in the mitochondrion. Its function is as follows. Molecular scaffold for [Fe-S] cluster assembly of mitochondrial iron-sulfur proteins. This is NifU-like protein 4, mitochondrial (NIFU4) from Arabidopsis thaliana (Mouse-ear cress).